The chain runs to 438 residues: Adenylyltransferase and sulfurtransferase MOCS3 (438 aa).

ATP contacts are provided by residues Gly80, Asp101, 108-112 (TNLHR), Lys125, and 169-170 (DN). Zn(2+) contacts are provided by Cys210 and Cys213. The active-site Glycyl thioester intermediate; for adenylyltransferase activity is Cys227. Residues Cys285 and Cys288 each coordinate Zn(2+). A Rhodanese domain is found at 335-436 (SKQRHVLVDV…WTRNVDKEFP (102 aa)). The Cysteine persulfide intermediate; for sulfurtransferase activity role is filled by Cys392.

The protein in the N-terminal section; belongs to the HesA/MoeB/ThiF family. UBA4 subfamily. Zn(2+) serves as cofactor.

It is found in the cytoplasm. Its subcellular location is the cytosol. The catalysed reaction is [molybdopterin-synthase sulfur-carrier protein]-C-terminal Gly-Gly + ATP + H(+) = [molybdopterin-synthase sulfur-carrier protein]-C-terminal Gly-Gly-AMP + diphosphate. It carries out the reaction [molybdopterin-synthase sulfur-carrier protein]-C-terminal Gly-Gly-AMP + S-sulfanyl-L-cysteinyl-[cysteine desulfurase] + AH2 = [molybdopterin-synthase sulfur-carrier protein]-C-terminal-Gly-aminoethanethioate + L-cysteinyl-[cysteine desulfurase] + A + AMP + 2 H(+). It functions in the pathway tRNA modification; 5-methoxycarbonylmethyl-2-thiouridine-tRNA biosynthesis. It participates in cofactor biosynthesis; molybdopterin biosynthesis. Functionally, plays a central role in 2-thiolation of mcm(5)S(2)U at tRNA wobble positions of cytosolic tRNA(Lys), tRNA(Glu) and tRNA(Gln). Also essential during biosynthesis of the molybdenum cofactor. Acts by mediating the C-terminal thiocarboxylation of sulfur carriers URM1 and MOCS2A. Its N-terminus first activates URM1 and MOCS2A as acyl-adenylates (-COAMP), then the persulfide sulfur on the catalytic cysteine is transferred to URM1 and MOCS2A to form thiocarboxylation (-COSH) of their C-terminus. The reaction probably involves hydrogen sulfide that is generated from the persulfide intermediate and that acts as a nucleophile towards URM1 and MOCS2A. Subsequently, a transient disulfide bond is formed. Does not use thiosulfate as sulfur donor; NFS1 probably acting as a sulfur donor for thiocarboxylation reactions. The sequence is that of Adenylyltransferase and sulfurtransferase MOCS3 from Culex quinquefasciatus (Southern house mosquito).